A 727-amino-acid polypeptide reads, in one-letter code: Telomere repeats-binding bouquet formation protein 1 (727 aa).

ARM repeat units follow at residues 101-144 (ELFE…RETG) and 339-382 (NGLP…GEYP). The stretch at 398-446 (ENNLEEHWRKAKEILHRIEQLEREGNEEEIQRENYQDNISSMNISIQNT) forms a coiled coil. A compositionally biased stretch (basic and acidic residues) spans 457-468 (RGSKAEDEDKSH). A disordered region spans residues 457 to 493 (RGSKAEDEDKSHSRQLQSYKSHGVMSKACTNDDQMKT). Positions 523 to 662 (QNLHEETTFE…QRLSNESTTP (140 aa)) are interaction with TERF1. A Phosphothreonine modification is found at threonine 648. One can recognise a Myb-like domain in the interval 666 to 719 (KKRRIRKNFTEEEVNYLFNGVKKMGNHWNSILWSFPFQQGRKAVDLAHKYHKLT).

The protein belongs to the TERB1 family. In terms of assembly, component of the MAJIN-TERB1-TERB2 complex, composed of MAJIN, TERB1 and TERB2. Interacts with TERF1, STAG3 and SUN1. Interacts (via Myb-like domain) with the cohesin complex; probably mediated via interaction with STAG3. Phosphorylated by CDK. Phosphorylation by CDK takes place in late prophase when the cap exchange is prominent. is important for the stabilization of telomere attachment but dispenable for the cap exchange.

It localises to the chromosome. The protein resides in the telomere. The protein localises to the nucleus inner membrane. Its function is as follows. Meiosis-specific telomere-associated protein involved in meiotic telomere attachment to the nucleus inner membrane, a crucial step for homologous pairing and synapsis. Component of the MAJIN-TERB1-TERB2 complex, which promotes telomere cap exchange by mediating attachment of telomeric DNA to the inner nuclear membrane and replacement of the protective cap of telomeric chromosomes: in early meiosis, the MAJIN-TERB1-TERB2 complex associates with telomeric DNA and the shelterin/telosome complex. During prophase, the complex matures and promotes release of the shelterin/telosome complex from telomeric DNA. In the MAJIN-TERB1-TERB2 complex, TERB1 probably mediates association with the shelterin/telosome complex via interaction with TERF1, promoting priming telomeric DNA attachment'. Promotes telomere association with the nuclear envelope and deposition of the SUN-KASH/LINC complex. Also recruits cohesin to telomeres to develop structural rigidity. This Homo sapiens (Human) protein is Telomere repeats-binding bouquet formation protein 1.